The following is a 519-amino-acid chain: RxLR effector protein PITG_15278 (519 aa).

The first 24 residues, 1 to 24, serve as a signal peptide directing secretion; sequence MHFIYRVVLVLAAFALFKVDSISA. The short motif at 49 to 59 is the RxLR-dEER element; the sequence is RQLRVMDDNER.

It belongs to the RxLR effector family.

It localises to the secreted. The protein localises to the host cytoplasm. Its function is as follows. Effector that enhances P.infestans colonization of Nicotiana benthamiana leaves. The sequence is that of RxLR effector protein PITG_15278 from Phytophthora infestans (strain T30-4) (Potato late blight agent).